Here is a 933-residue protein sequence, read N- to C-terminus: Bifunctional uridylyltransferase/uridylyl-removing enzyme (933 aa).

The interval 1–379 is uridylyltransferase; it reads MAKISLKLDE…TFQRRKRKLA (379 aa). Residues 380-736 are uridylyl-removing; it reads GTSDFIVDNH…VKTHQFEAVT (357 aa). The region spanning 496–619 is the HD domain; it reads VDEHLIRCIG…VQSVERLKLL (124 aa). ACT domains lie at 737–818 and 848–922; these read EITV…EMIE and VIEV…GIAP.

It belongs to the GlnD family. Requires Mg(2+) as cofactor.

It catalyses the reaction [protein-PII]-L-tyrosine + UTP = [protein-PII]-uridylyl-L-tyrosine + diphosphate. It carries out the reaction [protein-PII]-uridylyl-L-tyrosine + H2O = [protein-PII]-L-tyrosine + UMP + H(+). Uridylyltransferase (UTase) activity is inhibited by glutamine, while glutamine activates uridylyl-removing (UR) activity. Its function is as follows. Modifies, by uridylylation and deuridylylation, the PII regulatory proteins (GlnB and homologs), in response to the nitrogen status of the cell that GlnD senses through the glutamine level. Under low glutamine levels, catalyzes the conversion of the PII proteins and UTP to PII-UMP and PPi, while under higher glutamine levels, GlnD hydrolyzes PII-UMP to PII and UMP (deuridylylation). Thus, controls uridylylation state and activity of the PII proteins, and plays an important role in the regulation of nitrogen fixation and metabolism. The polypeptide is Bifunctional uridylyltransferase/uridylyl-removing enzyme (Mesorhizobium japonicum (strain LMG 29417 / CECT 9101 / MAFF 303099) (Mesorhizobium loti (strain MAFF 303099))).